Consider the following 280-residue polypeptide: Protease HtpX (280 aa).

The next 2 helical transmembrane spans lie at 7–26 (TFIL…GLLG) and 30–49 (GMLV…YWYS). His129 serves as a coordination point for Zn(2+). Residue Glu130 is part of the active site. Zn(2+) is bound at residue His133. The next 2 helical transmembrane spans lie at 146-166 (ATIA…SMFG) and 178-198 (VVGM…QMAI). Position 203 (Glu203) interacts with Zn(2+).

Belongs to the peptidase M48B family. Requires Zn(2+) as cofactor.

Its subcellular location is the cell inner membrane. This is Protease HtpX from Legionella pneumophila (strain Lens).